Here is a 434-residue protein sequence, read N- to C-terminus: Trigger factor (434 aa).

One can recognise a PPIase FKBP-type domain in the interval 161 to 246 (GDRVVIDFAG…VKGVEAPILP (86 aa)).

Belongs to the FKBP-type PPIase family. Tig subfamily.

It is found in the cytoplasm. It carries out the reaction [protein]-peptidylproline (omega=180) = [protein]-peptidylproline (omega=0). In terms of biological role, involved in protein export. Acts as a chaperone by maintaining the newly synthesized protein in an open conformation. Functions as a peptidyl-prolyl cis-trans isomerase. This Aromatoleum aromaticum (strain DSM 19018 / LMG 30748 / EbN1) (Azoarcus sp. (strain EbN1)) protein is Trigger factor.